A 547-amino-acid chain; its full sequence is ATP synthase subunit alpha (547 aa).

172–179 (GDRKTGKT) contacts ATP.

It belongs to the ATPase alpha/beta chains family. In terms of assembly, F-type ATPases have 2 components, CF(1) - the catalytic core - and CF(0) - the membrane proton channel. CF(1) has five subunits: alpha(3), beta(3), gamma(1), delta(1), epsilon(1). CF(0) has three main subunits: a(1), b(2) and c(9-12). The alpha and beta chains form an alternating ring which encloses part of the gamma chain. CF(1) is attached to CF(0) by a central stalk formed by the gamma and epsilon chains, while a peripheral stalk is formed by the delta and b chains.

It is found in the cell membrane. It catalyses the reaction ATP + H2O + 4 H(+)(in) = ADP + phosphate + 5 H(+)(out). Produces ATP from ADP in the presence of a proton gradient across the membrane. The alpha chain is a regulatory subunit. The chain is ATP synthase subunit alpha from Rhodococcus opacus (strain B4).